The sequence spans 90 residues: Toxin 3FTx-Psa1 (90 aa).

The first 21 residues, methionine 1–threonine 21, serve as a signal peptide directing secretion. 4 disulfide bridges follow: cysteine 24/cysteine 43, cysteine 36/cysteine 61, cysteine 65/cysteine 76, and cysteine 77/cysteine 82.

This sequence belongs to the three-finger toxin family. Ancestral subfamily. Expressed by the venom gland.

The protein resides in the secreted. In Psammophis mossambicus (Olive sand snake), this protein is Toxin 3FTx-Psa1.